The sequence spans 218 residues: Protein N-lysine methyltransferase METTL21A (218 aa).

Residues Trp-47, 73 to 75, Asp-94, Trp-125, and Ala-143 each bind S-adenosyl-L-methionine; that span reads GAG.

The protein belongs to the methyltransferase superfamily. METTL21 family. Interacts with heat shock 70 family members; at least some of these proteins are methylation substrates.

Its subcellular location is the cytoplasm. It carries out the reaction L-lysyl-[protein] + 3 S-adenosyl-L-methionine = N(6),N(6),N(6)-trimethyl-L-lysyl-[protein] + 3 S-adenosyl-L-homocysteine + 3 H(+). Protein-lysine methyltransferase that selectively trimethylates residues in heat shock protein 70 (HSP70) family members. Contributes to the in vivo trimethylation of Lys residues in HSPA1 and HSPA8. In vitro methylates 'Lys-561' in HSPA1, 'Lys-564' in HSPA2, 'Lys-585' in HSPA5, 'Lys-563' in HSPA6 and 'Lys-561' in HSPA8. In Bos taurus (Bovine), this protein is Protein N-lysine methyltransferase METTL21A (METTL21A).